The primary structure comprises 470 residues: mRNA export factor ICP27 homolog (470 aa).

Disordered stretches follow at residues 1–31 and 62–204; these read MALS…TGGD and VGDP…DRLN. A compositionally biased stretch (polar residues) spans 71–85; it reads VSFSASPQRAQPSNP. Composition is skewed to basic residues over residues 94 to 107 and 178 to 187; these read HGRR…RRNN and RVHRNRRRGN. Zn(2+)-binding residues include C359, H437, C441, and C446. The CHC2-type zinc-finger motif lies at 359-446; that stretch reads CYLSSSGSPT…HKRRCKADTC (88 aa).

The protein belongs to the HHV-1 ICP27 protein family. As to quaternary structure, homodimer. Homodimerization is required for transactivation. Associates in a complex with RNA, and host export factors NXF1/TAP and ALYREF; these interactions allow nuclear export of viral transcripts. Interacts with three host shuttling SR proteins SRSF1, SRSF3 and SRSF7. Interacts with host SRPK1. Interacts with IE62; this interaction enhances IE62 transactivation.

Its subcellular location is the host cytoplasm. The protein resides in the host nucleus. In terms of biological role, multifunctional regulator of the expression of viral genes that mediates nuclear export of viral intronless mRNAs. This immediate early (EI) protein promotes the nuclear export of viral intronless mRNAs by interacting with mRNAs and host NXF1/TAP. This Equine herpesvirus 1 (strain Ab4p) (EHV-1) protein is mRNA export factor ICP27 homolog.